We begin with the raw amino-acid sequence, 360 residues long: Peptide chain release factor 1 (360 aa).

At Gln234 the chain carries N5-methylglutamine.

It belongs to the prokaryotic/mitochondrial release factor family. Post-translationally, methylated by PrmC. Methylation increases the termination efficiency of RF1.

It localises to the cytoplasm. Its function is as follows. Peptide chain release factor 1 directs the termination of translation in response to the peptide chain termination codons UAG and UAA. The protein is Peptide chain release factor 1 of Clostridium perfringens (strain 13 / Type A).